We begin with the raw amino-acid sequence, 358 residues long: Methylthioribose-1-phosphate isomerase (358 aa).

Residues 54 to 56, Arg96, and Gln205 each bind substrate; that span reads RGA. Residue Asp246 is the Proton donor of the active site. 256 to 257 lines the substrate pocket; the sequence is NK.

It belongs to the eIF-2B alpha/beta/delta subunits family. MtnA subfamily.

The catalysed reaction is 5-(methylsulfanyl)-alpha-D-ribose 1-phosphate = 5-(methylsulfanyl)-D-ribulose 1-phosphate. It functions in the pathway amino-acid biosynthesis; L-methionine biosynthesis via salvage pathway; L-methionine from S-methyl-5-thio-alpha-D-ribose 1-phosphate: step 1/6. In terms of biological role, catalyzes the interconversion of methylthioribose-1-phosphate (MTR-1-P) into methylthioribulose-1-phosphate (MTRu-1-P). This chain is Methylthioribose-1-phosphate isomerase, found in Azotobacter vinelandii (strain DJ / ATCC BAA-1303).